Here is a 229-residue protein sequence, read N- to C-terminus: Octanoyltransferase (229 aa).

The BPL/LPL catalytic domain occupies 47–225; the sequence is PSSPEAVWIL…SLAARFHLAW (179 aa). Substrate contacts are provided by residues 89–96, 156–158, and 169–171; these read RGGEVTHH, AIG, and GLA. C187 functions as the Acyl-thioester intermediate in the catalytic mechanism.

This sequence belongs to the LipB family.

Its subcellular location is the cytoplasm. It carries out the reaction octanoyl-[ACP] + L-lysyl-[protein] = N(6)-octanoyl-L-lysyl-[protein] + holo-[ACP] + H(+). Its pathway is protein modification; protein lipoylation via endogenous pathway; protein N(6)-(lipoyl)lysine from octanoyl-[acyl-carrier-protein]: step 1/2. Its function is as follows. Catalyzes the transfer of endogenously produced octanoic acid from octanoyl-acyl-carrier-protein onto the lipoyl domains of lipoate-dependent enzymes. Lipoyl-ACP can also act as a substrate although octanoyl-ACP is likely to be the physiological substrate. This chain is Octanoyltransferase, found in Synechococcus sp. (strain CC9902).